The primary structure comprises 144 residues: Large ribosomal subunit protein uL15 (144 aa).

Residues 1-59 (MELNNLKPAEGAKHAKRRVGRGIGSGLGKTAGRGHKGQKSRSGGFHKVGFEGGQMPLQR) are disordered. Residues 21–31 (RGIGSGLGKTA) are compositionally biased toward gly residues.

Belongs to the universal ribosomal protein uL15 family. As to quaternary structure, part of the 50S ribosomal subunit.

Its function is as follows. Binds to the 23S rRNA. The polypeptide is Large ribosomal subunit protein uL15 (Burkholderia thailandensis (strain ATCC 700388 / DSM 13276 / CCUG 48851 / CIP 106301 / E264)).